A 189-amino-acid polypeptide reads, in one-letter code: Movement protein (189 aa).

It belongs to the tombusvirus/aureusvirus movement protein p22 family. Interacts with host protein HFI22. Post-translationally, phosphorylated.

The protein resides in the host membrane. Transports viral genome to neighboring plant cells directly through plasmosdesmata, without any budding. The movement protein allows efficient cell to cell propagation, by bypassing the host cell wall barrier. This chain is Movement protein, found in Tomato bushy stunt virus (strain BS-3) (TBSV).